The primary structure comprises 117 residues: Large ribosomal subunit protein bL20 (117 aa).

The protein belongs to the bacterial ribosomal protein bL20 family.

Functionally, binds directly to 23S ribosomal RNA and is necessary for the in vitro assembly process of the 50S ribosomal subunit. It is not involved in the protein synthesizing functions of that subunit. The sequence is that of Large ribosomal subunit protein bL20 from Wolinella succinogenes (strain ATCC 29543 / DSM 1740 / CCUG 13145 / JCM 31913 / LMG 7466 / NCTC 11488 / FDC 602W) (Vibrio succinogenes).